We begin with the raw amino-acid sequence, 315 residues long: MNLAYIPSPTFSKFEIGPFTIHMYAICILIGICVAVWILTTRWKRYGGTFDQILDTTLVTVPCALVGARLYHCITTPADYFPPTGNLVNILKVWEGGMAIFGGISVGTLVAFLWCRHKHYPFAIFADAIAPALPVAQAIGRLGNWFNQELYGWPTTLPWGLKLNDADAIGKSEICYSGAQCPDYRTTLFHPTFLYEMIWNLIGAALIIYLGHKLADRLKAGQQFAMYLMWYGLGRTWIENVRINYSTVILGLRTNMWTAIIVFVLGCILFVVLYQYGPDPKAQARGLAAVTADELERQSIEEERLRQKKQAKRTK.

2 helical membrane passes run 19–39 and 93–113; these read FTIH…VWIL and VWEG…VAFL. Arg-141 contributes to the a 1,2-diacyl-sn-glycero-3-phospho-(1'-sn-glycerol) binding site. 2 helical membrane-spanning segments follow: residues 188–208 and 256–276; these read LFHP…ALII and MWTA…LYQY.

It belongs to the Lgt family.

It localises to the cell membrane. The enzyme catalyses L-cysteinyl-[prolipoprotein] + a 1,2-diacyl-sn-glycero-3-phospho-(1'-sn-glycerol) = an S-1,2-diacyl-sn-glyceryl-L-cysteinyl-[prolipoprotein] + sn-glycerol 1-phosphate + H(+). It functions in the pathway protein modification; lipoprotein biosynthesis (diacylglyceryl transfer). Functionally, catalyzes the transfer of the diacylglyceryl group from phosphatidylglycerol to the sulfhydryl group of the N-terminal cysteine of a prolipoprotein, the first step in the formation of mature lipoproteins. The protein is Phosphatidylglycerol--prolipoprotein diacylglyceryl transferase of Bifidobacterium longum subsp. infantis (strain ATCC 15697 / DSM 20088 / JCM 1222 / NCTC 11817 / S12).